We begin with the raw amino-acid sequence, 98 residues long: UPF0235 protein APJL_1398 (98 aa).

The protein belongs to the UPF0235 family.

The sequence is that of UPF0235 protein APJL_1398 from Actinobacillus pleuropneumoniae serotype 3 (strain JL03).